The following is a 532-amino-acid chain: Bone morphogenetic protein receptor type-1A (532 aa).

Residues 1–23 (MPQLYIYIRLLGAYLFIISRVQG) form the signal peptide. At 24–152 (QNLDSMLHGT…IGPFFDGSIR (129 aa)) the chain is on the extracellular side. Disulfide bonds link Cys61-Cys82, Cys63-Cys67, and Cys76-Cys100. Asn73 carries N-linked (GlcNAc...) asparagine glycosylation. Positions 107–109 (DFQ) are mediates specificity for BMP ligand. Intrachain disulfides connect Cys110/Cys124 and Cys125/Cys130. The chain crosses the membrane as a helical span at residues 153 to 176 (WLVLLISMAVCIIAMIIFSSCFCY). The Cytoplasmic segment spans residues 177-532 (KHYCKSISSR…KMVESQDVKI (356 aa)). The 30-residue stretch at 204 to 233 (ESLKDLIDQSQSSGSGSGLPLLVQRTIAKQ) folds into the GS domain. The 292-residue stretch at 234–525 (IQMVRQVGKG…RIKKTLAKMV (292 aa)) folds into the Protein kinase domain. Residues 240-248 (VGKGRYGEV) and Lys261 each bind ATP. Asp362 acts as the Proton acceptor in catalysis.

Belongs to the protein kinase superfamily. TKL Ser/Thr protein kinase family. TGFB receptor subfamily. As to quaternary structure, interacts with low affinity with GDF5; positively regulates chondrocyte differentiation. Interacts with BMP4. Interacts with SCUBE3. Interacts with TSC22D1/TSC-22. Interacts with BMP2; the interaction may induce HAMP expression. Interacts with BMP6. Interacts with heterodimers composed of BMP2 and BMP6 in vitro; the interaction may induce HAMP expression. Interacts with TGFBR3. The cofactor is Mg(2+). Requires Mn(2+) as cofactor. In terms of processing, glycosylated. In terms of tissue distribution, highly expressed in skeletal muscle.

It localises to the cell membrane. The protein localises to the cell surface. It carries out the reaction L-threonyl-[receptor-protein] + ATP = O-phospho-L-threonyl-[receptor-protein] + ADP + H(+). The enzyme catalyses L-seryl-[receptor-protein] + ATP = O-phospho-L-seryl-[receptor-protein] + ADP + H(+). Its function is as follows. On ligand binding, forms a receptor complex consisting of two type II and two type I transmembrane serine/threonine kinases. Type II receptors phosphorylate and activate type I receptors which autophosphorylate, then bind and activate SMAD transcriptional regulators. Receptor for BMP2, BMP4, GDF5 and GDF6. Positively regulates chondrocyte differentiation through GDF5 interaction. Mediates induction of adipogenesis by GDF6. May promote the expression of HAMP, potentially via its interaction with BMP2. The sequence is that of Bone morphogenetic protein receptor type-1A (BMPR1A) from Homo sapiens (Human).